Reading from the N-terminus, the 414-residue chain is Putative competence-damage inducible protein (414 aa).

This sequence belongs to the CinA family.

The sequence is that of Putative competence-damage inducible protein from Moorella thermoacetica (strain ATCC 39073 / JCM 9320).